The chain runs to 181 residues: Cyclic AMP-dependent transcription factor ATF-3 (181 aa).

Lys-78 is covalently cross-linked (Glycyl lysine isopeptide (Lys-Gly) (interchain with G-Cter in SUMO2)). In terms of domain architecture, bZIP spans 86–149 (DERKKRRRER…QHLIYMLNLH (64 aa)). The segment at 88–110 (RKKRRRERNKIAAAKCRNKKKEK) is basic motif. A leucine-zipper region spans residues 114–142 (LQKESEKLESVNAELKAQIEELKNEKQHL). Thr-162 carries the post-translational modification Phosphothreonine. Residue Lys-175 forms a Glycyl lysine isopeptide (Lys-Gly) (interchain with G-Cter in SUMO2) linkage.

It belongs to the bZIP family. ATF subfamily. As to quaternary structure, binds DNA as a homodimer or a heterodimer. Interacts with KAT5; promoting KAT5 autoacetylation and KAT5 deubiquitination by USP7.

The protein localises to the nucleus. Functionally, this protein binds the cAMP response element (CRE) (consensus: 5'-GTGACGT[AC][AG]-3'), a sequence present in many viral and cellular promoters. Represses transcription from promoters with ATF sites. It may repress transcription by stabilizing the binding of inhibitory cofactors at the promoter. In terms of biological role, activates transcription presumably by sequestering inhibitory cofactors away from the promoters. Its function is as follows. Stress-induced isoform, counteracts the transcriptional repression of isoform 1. The sequence is that of Cyclic AMP-dependent transcription factor ATF-3 from Homo sapiens (Human).